Here is a 419-residue protein sequence, read N- to C-terminus: CCA-adding enzyme (419 aa).

ATP contacts are provided by Ser54 and Arg57. CTP contacts are provided by Ser54 and Arg57. The Mg(2+) site is built by Asp66, Asp68, and Asp118. ATP-binding residues include His141, Lys161, and Tyr170. CTP contacts are provided by His141, Lys161, and Tyr170.

Belongs to the tRNA nucleotidyltransferase/poly(A) polymerase family. Archaeal CCA-adding enzyme subfamily. Homodimer. The cofactor is Mg(2+).

It carries out the reaction a tRNA precursor + 2 CTP + ATP = a tRNA with a 3' CCA end + 3 diphosphate. The enzyme catalyses a tRNA with a 3' CCA end + 2 CTP + ATP = a tRNA with a 3' CCACCA end + 3 diphosphate. In terms of biological role, catalyzes the addition and repair of the essential 3'-terminal CCA sequence in tRNAs without using a nucleic acid template. Adds these three nucleotides in the order of C, C, and A to the tRNA nucleotide-73, using CTP and ATP as substrates and producing inorganic pyrophosphate. tRNA 3'-terminal CCA addition is required both for tRNA processing and repair. Also involved in tRNA surveillance by mediating tandem CCA addition to generate a CCACCA at the 3' terminus of unstable tRNAs. While stable tRNAs receive only 3'-terminal CCA, unstable tRNAs are marked with CCACCA and rapidly degraded. This chain is CCA-adding enzyme, found in Pyrobaculum aerophilum (strain ATCC 51768 / DSM 7523 / JCM 9630 / CIP 104966 / NBRC 100827 / IM2).